The sequence spans 251 residues: Probable ATP-dependent transporter ycf16 (251 aa).

The ABC transporter domain occupies 7–251 (LNIKNLDVTI…EKYGYDYLNK (245 aa)). 39 to 46 (GKNGSGKS) serves as a coordination point for ATP.

This sequence belongs to the ABC transporter superfamily. Ycf16 family.

The protein localises to the plastid. It localises to the chloroplast. The sequence is that of Probable ATP-dependent transporter ycf16 (ycf16) from Antithamnion sp. (Red alga).